The primary structure comprises 192 residues: Phosphoheptose isomerase (192 aa).

An SIS domain is found at 36–192 (CVDSLAAGGK…DQVEAVAAPA (157 aa)). Residue 51–53 (NGG) coordinates substrate. Positions 60 and 64 each coordinate Zn(2+). Substrate-binding positions include Glu64, 93–94 (ND), 119–121 (TTS), Ser124, and Gln171. 2 residues coordinate Zn(2+): Gln171 and His179.

It belongs to the SIS family. GmhA subfamily. Homotetramer. It depends on Zn(2+) as a cofactor.

It is found in the cytoplasm. It carries out the reaction 2 D-sedoheptulose 7-phosphate = D-glycero-alpha-D-manno-heptose 7-phosphate + D-glycero-beta-D-manno-heptose 7-phosphate. It participates in carbohydrate biosynthesis; D-glycero-D-manno-heptose 7-phosphate biosynthesis; D-glycero-alpha-D-manno-heptose 7-phosphate and D-glycero-beta-D-manno-heptose 7-phosphate from sedoheptulose 7-phosphate: step 1/1. Functionally, catalyzes the isomerization of sedoheptulose 7-phosphate in D-glycero-D-manno-heptose 7-phosphate. The chain is Phosphoheptose isomerase from Paramagnetospirillum magneticum (strain ATCC 700264 / AMB-1) (Magnetospirillum magneticum).